Here is a 1132-residue protein sequence, read N- to C-terminus: Protein CROWDED NUCLEI 1 (1132 aa).

Residues 1–31 (MSTPLKVWQRWSTPTKATNPDSNGSSHGTGL) form a disordered region. Residues 10 to 28 (RWSTPTKATNPDSNGSSHG) are compositionally biased toward polar residues. The stretch at 73–714 (LLIEKKEWSS…KKLKEQREQF (642 aa)) forms a coiled coil. 2 short sequence motifs (nuclear localization signal) span residues 379 to 386 (EKREAEWK) and 693 to 700 (IRKDVDDL). Phosphoserine is present on residues serine 774 and serine 803. Positions 849–859 (AESETGTKEVE) are enriched in basic and acidic residues. 4 disordered regions span residues 849 to 871 (AESE…DQSD), 883 to 909 (SLSN…TRSV), 924 to 1039 (INLY…VQQE), and 1061 to 1132 (GVST…FLTT). The segment covering 861–871 (TNVNSDGDQSD) has biased composition (polar residues). Serine 865 and serine 883 each carry phosphoserine. The segment covering 895 to 907 (MKGKGKARTRRTR) has biased composition (basic residues). Serine 908 bears the Phosphoserine mark. Residues serine 1093, serine 1105, and serine 1112 each carry the phosphoserine modification. Residues 1095–1105 (DVNKTPLRADS) are compositionally biased toward basic and acidic residues.

It belongs to the CRWN family. As to quaternary structure, core component of the LINC complex which is composed of inner nuclear membrane SUN domain-containing proteins coupled to outer nuclear membrane WIP and WIT proteins. The LINC complex also involves nucleoskeletal proteins CRWN/LINC and possibly KAKU4 and the cytoskeletal myosin KAKU1. Interacts with SUN1 and SUN2. Binds to KAKU4. As to expression, expressed at low levels in roots, leaves, flowers and flower stalks.

It is found in the nucleus membrane. It localises to the nucleus. The protein resides in the nucleoplasm. Its subcellular location is the nucleus lamina. Component of SUN-protein-containing multivariate complexes also called LINC complexes which link the nucleoskeleton and cytoskeleton by providing versatile outer nuclear membrane attachment sites for cytoskeletal filaments. Required for nucleus structure organization (e.g. size and shape). This chain is Protein CROWDED NUCLEI 1, found in Arabidopsis thaliana (Mouse-ear cress).